Reading from the N-terminus, the 889-residue chain is Cytoplasmic aconitate hydratase (889 aa).

Substrate contacts are provided by residues glutamine 86 and 205–207 (DSH). The [4Fe-4S] cluster site is built by cysteine 437, cysteine 503, and cysteine 506. Residues arginine 536 and arginine 541 each contribute to the substrate site. At threonine 628 the chain carries Phosphothreonine. Residues arginine 699 and 779–780 (SR) contribute to the substrate site.

The protein belongs to the aconitase/IPM isomerase family. Interacts (when associated with the 4Fe-4S) with FBXL5. Interacts with frataxin(81-210). It depends on [4Fe-4S] cluster as a cofactor.

The protein localises to the cytoplasm. The protein resides in the cytosol. It carries out the reaction citrate = D-threo-isocitrate. Bifunctional iron sensor that switches between 2 activities depending on iron availability. Iron deprivation, promotes its mRNA binding activity through which it regulates the expression of genes involved in iron uptake, sequestration and utilization. Binds to iron-responsive elements (IRES) in the untranslated region of target mRNAs preventing for instance the translation of ferritin and aminolevulinic acid synthase and stabilizing the transferrin receptor mRNA. In terms of biological role, conversely, when cellular iron levels are high, binds a 4Fe-4S cluster which precludes RNA binding activity and promotes the aconitase activity, the isomerization of citrate to isocitrate via cis-aconitate. This chain is Cytoplasmic aconitate hydratase (ACO1), found in Homo sapiens (Human).